The primary structure comprises 212 residues: Nucleoredoxin-like protein 1 (212 aa).

Residues 1–164 (MASLFSGRIL…AAEVLDRNFQ (164 aa)) enclose the Thioredoxin domain. The interval 191 to 212 (AARGGRDPGGGGGEEGGAGGLF) is disordered. Gly residues predominate over residues 197-212 (DPGGGGGEEGGAGGLF).

It belongs to the nucleoredoxin family. In terms of assembly, interacts with isoform 1 of BSG.

The protein resides in the cell projection. Its subcellular location is the cilium. The protein localises to the photoreceptor outer segment. Functionally, plays an important role in retinal cone photoreceptor survival. In association with glucose transporter SLC16A1/GLUT1 and BSG, promotes retinal cone survival by enhancing aerobic glycolysis and accelerating the entry of glucose into photoreceptors. May play a role in cone cell viability, slowing down cone degeneration, does not seem to play a role in degenerating rods. This chain is Nucleoredoxin-like protein 1 (NXNL1), found in Homo sapiens (Human).